We begin with the raw amino-acid sequence, 191 residues long: MRVLGVDPGSRFMGFGVVEEKRGRLVHVGHGVIKGDPALPLSDRLRDLHGALTAALVKYRPAAVAVEGVFTFRNARSALVLGHARGVALLAAAQAGLPVFEYAPAKVKKAVGAGGADGKDAVARMVRTFLELDASVLERADASDALAVALCHLNHGRAAVPAASASGKKRKGAAALLADRLAPAYRRPEAR.

Catalysis depends on residues D7, E67, and D141. D7, E67, and D141 together coordinate Mg(2+).

This sequence belongs to the RuvC family. Homodimer which binds Holliday junction (HJ) DNA. The HJ becomes 2-fold symmetrical on binding to RuvC with unstacked arms; it has a different conformation from HJ DNA in complex with RuvA. In the full resolvosome a probable DNA-RuvA(4)-RuvB(12)-RuvC(2) complex forms which resolves the HJ. Requires Mg(2+) as cofactor.

The protein localises to the cytoplasm. It carries out the reaction Endonucleolytic cleavage at a junction such as a reciprocal single-stranded crossover between two homologous DNA duplexes (Holliday junction).. In terms of biological role, the RuvA-RuvB-RuvC complex processes Holliday junction (HJ) DNA during genetic recombination and DNA repair. Endonuclease that resolves HJ intermediates. Cleaves cruciform DNA by making single-stranded nicks across the HJ at symmetrical positions within the homologous arms, yielding a 5'-phosphate and a 3'-hydroxyl group; requires a central core of homology in the junction. The consensus cleavage sequence is 5'-(A/T)TT(C/G)-3'. Cleavage occurs on the 3'-side of the TT dinucleotide at the point of strand exchange. HJ branch migration catalyzed by RuvA-RuvB allows RuvC to scan DNA until it finds its consensus sequence, where it cleaves and resolves the cruciform DNA. This Myxococcus xanthus (strain DK1622) protein is Crossover junction endodeoxyribonuclease RuvC.